We begin with the raw amino-acid sequence, 713 residues long: Metal transporter CNNM3 (713 aa).

Residues 7-29 (AVVGWLGWVLAAFCLGSTAGEAA) traverse the membrane as a helical segment. An N-linked (GlcNAc...) asparagine glycan is attached at Asn-73. In terms of domain architecture, CNNM transmembrane spans 136–314 (EAAPPWALGL…DPYSDLSKGV (179 aa)). The next 4 helical transmembrane spans lie at 137–157 (AAPP…AAVA), 199–219 (CALG…AVLL), 227–247 (AVPA…VLPA), and 267–287 (LAVL…ELAA). CBS domains lie at 324-385 (LTPL…CTPL) and 392-458 (YNHP…ILDE). The segment at 664–713 (LPPSPENAELQAIPGSQTRLLGDKSRETAGSTNSRPSIPVEESPGRNPGV) is disordered. Phosphoserine is present on residues Ser-667 and Ser-706.

Belongs to the ACDP family. As to expression, widely expressed with highest levels in brain, kidney, liver, lung and heart.

The protein localises to the cell membrane. Its function is as follows. Probable metal transporter. The protein is Metal transporter CNNM3 (Cnnm3) of Mus musculus (Mouse).